The sequence spans 875 residues: Leucine--tRNA ligase (875 aa).

A 'HIGH' region motif is present at residues 57 to 67; sequence PYPSGQIHMGH. Residues 631 to 635 carry the 'KMSKS' region motif; it reads KMSKS. Lysine 634 is a binding site for ATP.

It belongs to the class-I aminoacyl-tRNA synthetase family.

The protein localises to the cytoplasm. It carries out the reaction tRNA(Leu) + L-leucine + ATP = L-leucyl-tRNA(Leu) + AMP + diphosphate. This Granulibacter bethesdensis (strain ATCC BAA-1260 / CGDNIH1) protein is Leucine--tRNA ligase.